Reading from the N-terminus, the 266-residue chain is 2-C-methyl-D-erythritol 4-phosphate cytidylyltransferase (266 aa).

Positions asparagine 229–isoleucine 266 are disordered. The segment covering histidine 243–alanine 252 has biased composition (polar residues).

The protein belongs to the IspD/TarI cytidylyltransferase family. IspD subfamily.

The catalysed reaction is 2-C-methyl-D-erythritol 4-phosphate + CTP + H(+) = 4-CDP-2-C-methyl-D-erythritol + diphosphate. It participates in isoprenoid biosynthesis; isopentenyl diphosphate biosynthesis via DXP pathway; isopentenyl diphosphate from 1-deoxy-D-xylulose 5-phosphate: step 2/6. In terms of biological role, catalyzes the formation of 4-diphosphocytidyl-2-C-methyl-D-erythritol from CTP and 2-C-methyl-D-erythritol 4-phosphate (MEP). The polypeptide is 2-C-methyl-D-erythritol 4-phosphate cytidylyltransferase (Xanthomonas axonopodis pv. citri (strain 306)).